We begin with the raw amino-acid sequence, 591 residues long: L-fucose isomerase (591 aa).

Active-site proton acceptor residues include E337 and D361. Mn(2+) is bound by residues E337, D361, and H528.

Belongs to the L-fucose isomerase family. In terms of assembly, homohexamer. Mn(2+) is required as a cofactor.

It is found in the cytoplasm. The catalysed reaction is L-fucose = L-fuculose. The protein operates within carbohydrate degradation; L-fucose degradation; L-lactaldehyde and glycerone phosphate from L-fucose: step 1/3. Its function is as follows. Converts the aldose L-fucose into the corresponding ketose L-fuculose. In Escherichia coli (strain ATCC 8739 / DSM 1576 / NBRC 3972 / NCIMB 8545 / WDCM 00012 / Crooks), this protein is L-fucose isomerase.